Consider the following 382-residue polypeptide: tRNA-queuosine alpha-mannosyltransferase (382 aa).

This sequence belongs to the glycosyltransferase group 1 family. Glycosyltransferase 4 subfamily.

It is found in the cytoplasm. The protein resides in the nucleus. It catalyses the reaction queuosine(34) in tRNA(Asp) + GDP-alpha-D-mannose = O-4''-alpha-D-mannosylqueuosine(34) in tRNA(Asp) + GDP + H(+). Functionally, glycosyltransferase that specifically catalyzes mannosylation of cytoplasmic tRNA(Asp) modified with queuosine at position 34 (queuosine(34)). Mannosylates the cyclopentene moiety of queuosine(34) in tRNA(Asp) to form mannosyl-queuosine(34). Mannosylation of queuosine(34) in tRNA(Asp) is required to slow-down elongation at cognate codons, GAC and GAU, thereby regulating protein translation. This is tRNA-queuosine alpha-mannosyltransferase (GTDC1) from Gallus gallus (Chicken).